Here is a 976-residue protein sequence, read N- to C-terminus: Vacuolar membrane protease (976 aa).

Residues 1 to 15 are Cytoplasmic-facing; sequence MKLKSVFRSVLKYRK. A helical transmembrane segment spans residues 16 to 36; it reads TNLSLLLLITYSIITLLYIFD. Over 37–359 the chain is Vacuolar; the sequence is HERYKLNLPK…KFFVISAKTL (323 aa). 2 N-linked (GlcNAc...) asparagine glycosylation sites follow: Asn-96 and Asn-121. Residues His-156 and Asp-168 each contribute to the Zn(2+) site. Residue Asn-189 is glycosylated (N-linked (GlcNAc...) asparagine). Glu-200 acts as the Proton acceptor in catalysis. Glu-201 contributes to the Zn(2+) binding site. N-linked (GlcNAc...) asparagine glycans are attached at residues Asn-212 and Asn-217. Zn(2+) contacts are provided by Glu-226 and His-300. A helical membrane pass occupies residues 360–380; that stretch reads FYWNCIFLLVSPVVAIGLYLI. The Cytoplasmic segment spans residues 381-392; the sequence is SRDRMTWKSHSW. A helical transmembrane segment spans residues 393–412; that stretch reads LSWTRFPLSLAAGIIVQKLF. Topologically, residues 413–428 are vacuolar; sequence SNDIIRSNPLTFSRNY. The chain crosses the membrane as a helical span at residues 429 to 449; that stretch reads FWPISAFFTQVIFTSYVLINC. At 450-461 the chain is on the cytoplasmic side; the sequence is SNFFFPCADMKS. The helical transmembrane segment at 462-482 threads the bilayer; sequence LSIIELFIILWTILLFTSKLL. The Vacuolar segment spans residues 483-496; the sequence is YSSDYRYTGLYPLS. Residues 497-517 form a helical membrane-spanning segment; it reads IFFLLSTIAAILRLLALALGM. Topologically, residues 518–627 are cytoplasmic; the sequence is RTRKRLGREC…NSLKLEYTDY (110 aa). The tract at residues 528–610 is disordered; that stretch reads RDHHSNYSSH…PLLKGSNSME (83 aa). Residues 549–558 are compositionally biased toward polar residues; that stretch reads NLEQPQDQFT. The segment covering 559–570 has biased composition (low complexity); sequence SSQDDQASIQDD. Residues 582 to 601 are compositionally biased toward basic and acidic residues; sequence NVDEDHGMDSSSQQHDERVP. A helical membrane pass occupies residues 628–648; sequence AWIIQFLLIVPIPSFILFNSV. At 649–668 the chain is on the vacuolar side; the sequence is DVIMDALNHTVQEGSKATFD. A glycan (N-linked (GlcNAc...) asparagine) is linked at Asn-656. Residues 669-689 traverse the membrane as a helical segment; it reads VLRFGMVGSILMALPILPFFY. The Cytoplasmic segment spans residues 690-692; sequence KVN. A helical transmembrane segment spans residues 693–713; the sequence is YITISLTALLFLISASKTLLV. Over 714–976 the chain is Vacuolar; sequence HPFTNSNPLK…LVIVKDAIIL (263 aa). Asn-768, Asn-796, Asn-811, Asn-866, and Asn-937 each carry an N-linked (GlcNAc...) asparagine glycan.

This sequence belongs to the peptidase M28 family. Zn(2+) serves as cofactor.

The protein resides in the vacuole membrane. Its function is as follows. May be involved in vacuolar sorting and osmoregulation. This is Vacuolar membrane protease from Saccharomyces cerevisiae (strain RM11-1a) (Baker's yeast).